The primary structure comprises 537 residues: ESX-2 secretion system protein EccE2 (537 aa).

Residues 31-51 (ALGGQLGAVMAVVVGVALVFV) traverse the membrane as a helical segment.

The protein belongs to the EccE family. Could be part of the ESX-2 / type VII secretion system (T7SS), which is composed of cytosolic and membrane components.

It localises to the cell membrane. This is ESX-2 secretion system protein EccE2 (eccE2) from Mycobacterium tuberculosis (strain CDC 1551 / Oshkosh).